A 158-amino-acid polypeptide reads, in one-letter code: MPKESGRKVVATNRKARHDYHVLDTYEAGIALMGTEVKSLREGHASMVDGFCTFYNDELWMEAIHIPEYNQGSWTNHAARRRRKLLLHREELIKISRKVQEAGYTIVPLQLYFVDGRAKVEIGVARGKREYDKRQTLREQQDNREAQREMRERNRRRG.

Basic and acidic residues predominate over residues 133 to 152; that stretch reads KRQTLREQQDNREAQREMRE. Residues 133–158 are disordered; sequence KRQTLREQQDNREAQREMRERNRRRG.

It belongs to the SmpB family.

It is found in the cytoplasm. Functionally, required for rescue of stalled ribosomes mediated by trans-translation. Binds to transfer-messenger RNA (tmRNA), required for stable association of tmRNA with ribosomes. tmRNA and SmpB together mimic tRNA shape, replacing the anticodon stem-loop with SmpB. tmRNA is encoded by the ssrA gene; the 2 termini fold to resemble tRNA(Ala) and it encodes a 'tag peptide', a short internal open reading frame. During trans-translation Ala-aminoacylated tmRNA acts like a tRNA, entering the A-site of stalled ribosomes, displacing the stalled mRNA. The ribosome then switches to translate the ORF on the tmRNA; the nascent peptide is terminated with the 'tag peptide' encoded by the tmRNA and targeted for degradation. The ribosome is freed to recommence translation, which seems to be the essential function of trans-translation. The protein is SsrA-binding protein of Pseudarthrobacter chlorophenolicus (strain ATCC 700700 / DSM 12829 / CIP 107037 / JCM 12360 / KCTC 9906 / NCIMB 13794 / A6) (Arthrobacter chlorophenolicus).